Reading from the N-terminus, the 196-residue chain is dITP/XTP pyrophosphatase (196 aa).

9–14 is a binding site for substrate; it reads TSNAGK. Mg(2+)-binding residues include glutamate 39 and aspartate 68. The Proton acceptor role is filled by aspartate 68. Substrate is bound by residues serine 69, 147–150, lysine 170, and 175–176; these read FGYD and HR.

Belongs to the HAM1 NTPase family. In terms of assembly, homodimer. Mg(2+) is required as a cofactor.

It catalyses the reaction XTP + H2O = XMP + diphosphate + H(+). The enzyme catalyses dITP + H2O = dIMP + diphosphate + H(+). The catalysed reaction is ITP + H2O = IMP + diphosphate + H(+). Pyrophosphatase that catalyzes the hydrolysis of nucleoside triphosphates to their monophosphate derivatives, with a high preference for the non-canonical purine nucleotides XTP (xanthosine triphosphate), dITP (deoxyinosine triphosphate) and ITP. Seems to function as a house-cleaning enzyme that removes non-canonical purine nucleotides from the nucleotide pool, thus preventing their incorporation into DNA/RNA and avoiding chromosomal lesions. The chain is dITP/XTP pyrophosphatase from Nostoc sp. (strain PCC 7120 / SAG 25.82 / UTEX 2576).